A 107-amino-acid chain; its full sequence is Glutaredoxin-1 (107 aa).

N-acetylalanine is present on Ala-2. The Glutaredoxin domain occupies 3–106 (QEFVNCKIQS…ARLKQIGALQ (104 aa)). Lys-9 bears the N6-succinyllysine mark. 2 disulfides stabilise this stretch: Cys-23–Cys-26 and Cys-79–Cys-83.

This sequence belongs to the glutaredoxin family.

It localises to the cytoplasm. In terms of biological role, has a glutathione-disulfide oxidoreductase activity in the presence of NADPH and glutathione reductase. Reduces low molecular weight disulfides and proteins. In Rattus norvegicus (Rat), this protein is Glutaredoxin-1 (Glrx).